The sequence spans 175 residues: Ribosome maturation factor RimM (175 aa).

The PRC barrel domain maps to 95–175 (EEGDYYWHDL…TITVDWDAGF (81 aa)).

The protein belongs to the RimM family. In terms of assembly, binds ribosomal protein uS19.

Its subcellular location is the cytoplasm. In terms of biological role, an accessory protein needed during the final step in the assembly of 30S ribosomal subunit, possibly for assembly of the head region. Essential for efficient processing of 16S rRNA. May be needed both before and after RbfA during the maturation of 16S rRNA. It has affinity for free ribosomal 30S subunits but not for 70S ribosomes. This chain is Ribosome maturation factor RimM, found in Glaesserella parasuis serovar 5 (strain SH0165) (Haemophilus parasuis).